We begin with the raw amino-acid sequence, 173 residues long: NADH-ubiquinone oxidoreductase chain 6 (173 aa).

The next 5 membrane-spanning stretches (helical) occupy residues 1–21 (MTYF…AVAS), 27–47 (YGVV…LSLG), 48–68 (ASFV…VVFV), 87–107 (VIGY…ISGF), and 139–159 (WGVG…FVVL).

Belongs to the complex I subunit 6 family.

The protein localises to the mitochondrion membrane. The catalysed reaction is a ubiquinone + NADH + 5 H(+)(in) = a ubiquinol + NAD(+) + 4 H(+)(out). In terms of biological role, core subunit of the mitochondrial membrane respiratory chain NADH dehydrogenase (Complex I) that is believed to belong to the minimal assembly required for catalysis. Complex I functions in the transfer of electrons from NADH to the respiratory chain. The immediate electron acceptor for the enzyme is believed to be ubiquinone. The polypeptide is NADH-ubiquinone oxidoreductase chain 6 (MT-ND6) (Brachyramphus marmoratus (Marbled murrelet)).